The following is a 220-amino-acid chain: MIVQHKTAKIEEDHGLFQPILRPSDISKTTDTKFIQSSPYIEKEHWLDLGTLSVGHYFLSLALQTFVPKDSVRYAHLPYAQAFDIAEIVNLIREYSHKYHKHIPAFSAYIVAFRSVLQPEVQVSPEARHKLAEIDKGSHLEANVSGGLLKYWYGIPDDVFGQNLATCWWTSKESARLGGAGKIHREGLKAVRGWYKNWKIEEYELEVIEGGSSYIFKGLS.

It belongs to the UPF0643 family.

The protein resides in the cytoplasm. It is found in the nucleus. In Schizosaccharomyces pombe (strain 972 / ATCC 24843) (Fission yeast), this protein is UPF0643 protein PB2B2.08.